The following is a 72-amino-acid chain: Crustacean hyperglycemic hormone (72 aa).

3 disulfides stabilise this stretch: Cys-7–Cys-43, Cys-23–Cys-39, and Cys-26–Cys-52. The residue at position 72 (Val-72) is a Valine amide.

The protein localises to the secreted. Hormone found in the sinus gland of isopods and decapods which controls the blood sugar level. Has a secretagogue action over the amylase released from the midgut gland. May act as a stress hormone and may be involved in the control of molting and reproduction. This Penaeus schmitti (White shrimp) protein is Crustacean hyperglycemic hormone.